The primary structure comprises 569 residues: Endonuclease/exonuclease/phosphatase family domain-containing protein 1 (569 aa).

The interval 1–20 is disordered; that stretch reads MGSTLGCHRSIPRDPSDLSH. The N-myristoyl glycine moiety is linked to residue Gly-2. Basic and acidic residues predominate over residues 11–20; that stretch reads IPRDPSDLSH. Ser-16, Ser-21, and Ser-25 each carry phosphoserine. The HhH domain occupies 38-67; that stretch reads ERLNINTATEEELMTLPGVTRAVARSIVEY. Phosphoserine is present on residues Ser-106, Ser-110, Ser-160, and Ser-173. The segment at 200–225 is disordered; sequence SRPPSTHTNGGLTFTAKPHPSPTSLS. Residues 202–211 are compositionally biased toward polar residues; the sequence is PPSTHTNGGL. Thr-265 is modified (phosphothreonine). At Ser-428 the chain carries Phosphoserine. Residues 545-569 are disordered; sequence SKKDAPRNGSGVALERSEANIKHER. Positions 559–569 are enriched in basic and acidic residues; it reads ERSEANIKHER.

This is Endonuclease/exonuclease/phosphatase family domain-containing protein 1 (EEPD1) from Homo sapiens (Human).